We begin with the raw amino-acid sequence, 473 residues long: Cholesterol 22-monohydroxylase CYP90B52 (473 aa).

Residues 2–22 (EGLLLLLPTAIIALYLYISLI) traverse the membrane as a helical segment. C422 is a heme binding site.

The protein belongs to the cytochrome P450 family. As to expression, mainly expressed in leaves and roots and, at low levels, in fruits and stems.

The protein resides in the membrane. It catalyses the reaction cholesterol + reduced [NADPH--hemoprotein reductase] + O2 = (22S)-22-hydroxycholesterol + oxidized [NADPH--hemoprotein reductase] + H2O + H(+). The protein operates within steroid metabolism; cholesterol metabolism. Canonical brassinosteroid (BR)-biosynthetic enzyme capable of converting cholesterol to 22S-hydroxycholesterol via sterol-C22 hydroxylation. This is Cholesterol 22-monohydroxylase CYP90B52 from Paris polyphylla (Daiswa polyphylla).